We begin with the raw amino-acid sequence, 221 residues long: D-glycero-alpha-D-manno-heptose 1-phosphate guanylyltransferase (221 aa).

This sequence belongs to the D-alpha-D-heptose-1-P guanylyltransferase family.

It carries out the reaction D-glycero-alpha-D-manno-heptose 1-phosphate + GTP + H(+) = GDP-D-glycero-alpha-D-manno-heptose + diphosphate. The protein operates within nucleotide-sugar biosynthesis; GDP-D-glycero-alpha-D-manno-heptose biosynthesis; GDP-D-glycero-alpha-D-manno-heptose from D-glycero-alpha-D-manno-heptose 7-phosphate: step 3/3. It participates in capsule biogenesis; capsule polysaccharide biosynthesis. Functionally, catalyzes the GDP transfer from GTP to D-glycero-alpha-D-manno-heptose 1-phosphate, yielding GDP-D-alpha-D-heptose. Is able to use ATP, CTP or UTP as substrate in the presence of pyrophosphatase, but at a significantly slower rate. Can also form GDP-alpha-D-mannose from alpha-D-mannose 1-phosphate and GTP. In Campylobacter jejuni subsp. jejuni serotype O:2 (strain ATCC 700819 / NCTC 11168), this protein is D-glycero-alpha-D-manno-heptose 1-phosphate guanylyltransferase.